The following is a 142-amino-acid chain: ATP synthase epsilon chain (142 aa).

Belongs to the ATPase epsilon chain family. F-type ATPases have 2 components, CF(1) - the catalytic core - and CF(0) - the membrane proton channel. CF(1) has five subunits: alpha(3), beta(3), gamma(1), delta(1), epsilon(1). CF(0) has three main subunits: a, b and c.

It localises to the cell inner membrane. Produces ATP from ADP in the presence of a proton gradient across the membrane. This is ATP synthase epsilon chain from Shewanella sp. (strain ANA-3).